The primary structure comprises 464 residues: MTALQGFLTPTEIVAELDKYIIGQHDAKRNVAIALRNRWRRMHADADMRKEIMPNNILLIGPTGVGKTEIARRLAKLADAPFTKVEASKFTEVGYVGRDVESMVRDLVEQAVNMVKTQKKEEVKIKVSQVVEDILLDLLIPPVKSTGMGFKTASTQSIDTNEIPDNDQELNERTRELFREKIRSGELDERKVEINVQQQGPGVGVVGGAMDEASMMNIQEMIGNMMPKKTKKRKLSIAEARKILLEEESAKLIDMDDVKDEAIRKTENMGIIFIDEIDKVASSKKGNGPDVSREGVQRDLLPIVEGSAVNTKYGTVHTDHILFIAAGAFHVSKPSDLIPELQGRFPIRVELNSLTEADFYHILKEPKNALTRQYQALLSSENVNIEFHDDALKAISEIAFELNVEVENIGARRLHTVMSHLLNELLFDVPDKIETHSTVVITKELVDQKLKGLVKNRDLSQFIL.

ATP is bound by residues isoleucine 22, 64 to 69 (GVGKTE), aspartate 275, glutamate 340, and arginine 412.

It belongs to the ClpX chaperone family. HslU subfamily. A double ring-shaped homohexamer of HslV is capped on each side by a ring-shaped HslU homohexamer. The assembly of the HslU/HslV complex is dependent on binding of ATP.

The protein resides in the cytoplasm. Functionally, ATPase subunit of a proteasome-like degradation complex; this subunit has chaperone activity. The binding of ATP and its subsequent hydrolysis by HslU are essential for unfolding of protein substrates subsequently hydrolyzed by HslV. HslU recognizes the N-terminal part of its protein substrates and unfolds these before they are guided to HslV for hydrolysis. The sequence is that of ATP-dependent protease ATPase subunit HslU from Cytophaga hutchinsonii (strain ATCC 33406 / DSM 1761 / CIP 103989 / NBRC 15051 / NCIMB 9469 / D465).